The chain runs to 991 residues: 5'-3' exoribonuclease 2 (991 aa).

A Nuclear localization signal motif is present at residues 264-268; it reads TKKTK. Residues 404–418 show a composition bias toward basic and acidic residues; that stretch reads RRNENYRRRQQRESN. Disordered regions lie at residues 404 to 461, 547 to 582, and 872 to 991; these read RRNE…TQKI, SIES…ENTD, and AERS…NGYY. Residues 433 to 452 show a composition bias toward low complexity; the sequence is SVETQSTEVVTSSKSTSVDT. Low complexity-rich tracts occupy residues 878 to 889 and 896 to 910; these read SRRNNGNSYRGG and RRSY…RQSY. Residues 926-938 are compositionally biased toward polar residues; that stretch reads WSGNGNFPRSNAS. Residues 946 to 958 are compositionally biased toward gly residues; that stretch reads EGYGGRSRGGGYS. A compositionally biased stretch (polar residues) spans 980 to 991; sequence ESYNNNNRNGYY.

Belongs to the 5'-3' exonuclease family. XRN2/RAT1 subfamily. As to quaternary structure, interacts with din1/rai1; the interaction is direct, stabilizes dhp1 protein structure and may stimulate its exoribonuclease activity. The interaction also stimulates din1 pyrophosphohydrolase activity, probably by recruiting it to mRNA substrates.

It localises to the nucleus. In terms of biological role, possesses 5'-&gt;3' exoribonuclease activity. Required for the processing of nuclear mRNA and rRNA precursors. May promote the termination of transcription by RNA polymerase II. Essential for vegetative cell growth and chromosome segregation. This chain is 5'-3' exoribonuclease 2 (dhp1), found in Schizosaccharomyces pombe (strain 972 / ATCC 24843) (Fission yeast).